We begin with the raw amino-acid sequence, 210 residues long: MAQAKISAKAHEGRFCRSSSMADRSSRLLESLDQLELRVEALRDAATAVEQEKEILLEMIHSIQNSQDMRQISDGEREELNLTANRLMGRTLTVEVSVETIRNPQQEESLKHATRIIDEVVSKFLDDLGNAKSHLMSLYSACSSEVPPGPVDQKFQSIVIGCALEDQKKIKRRLETLLRNIDNSDKAIKLLEHAKGAGSKSLQNTDGKFN.

A2 bears the N-acetylalanine mark. S20, S31, and S73 each carry phosphoserine. The stretch at 20–60 (SMADRSSRLLESLDQLELRVEALRDAATAVEQEKEILLEMI) forms a coiled coil. The BAG domain maps to 109 to 189 (SLKHATRIID…NIDNSDKAIK (81 aa)).

As to quaternary structure, binds to the ATPase domain of HSP/HSC70 chaperones. May interact with NWD1. Interacts with HSPA1A (via NBD), HSPA1B (via NBD) and HSPA8. May interact with DNJC9; the interaction seems to be histone-dependent.

In terms of biological role, co-chaperone for HSP70 and HSC70 chaperone proteins. Acts as a nucleotide-exchange factor (NEF) promoting the release of ADP from the HSP70 and HSC70 proteins thereby triggering client/substrate protein release. In Mus musculus (Mouse), this protein is BAG family molecular chaperone regulator 2 (Bag2).